The primary structure comprises 217 residues: Large ribosomal subunit protein uL4 (217 aa).

The segment at 46–103 (KRQGTHATKTRGMVSGGGRKPFRQKGTGRARQGSIRAPHFTGGGTVHGPQPRDYSQRT) is disordered.

This sequence belongs to the universal ribosomal protein uL4 family. Part of the 50S ribosomal subunit.

In terms of biological role, one of the primary rRNA binding proteins, this protein initially binds near the 5'-end of the 23S rRNA. It is important during the early stages of 50S assembly. It makes multiple contacts with different domains of the 23S rRNA in the assembled 50S subunit and ribosome. Forms part of the polypeptide exit tunnel. The protein is Large ribosomal subunit protein uL4 of Corynebacterium jeikeium (strain K411).